A 283-amino-acid polypeptide reads, in one-letter code: Accumulation of dyads protein 2 (283 aa).

Residues 1–41 (MSDKEQTSGNTDLENAPAGYYSSHDNDVNGVAEDERPSHDS) form a disordered region. Residues 1-89 (MSDKEQTSGN…APAPVHKFAN (89 aa)) are Cytoplasmic-facing. The chain crosses the membrane as a helical span at residues 90 to 110 (PAPLGLSAFALTTFVLSMFNA). The Extracellular portion of the chain corresponds to 111–120 (RAQGITVPNV). The helical transmembrane segment at 121-141 (VVGCAMFYGGLVQLIAGIWEI) threads the bilayer. Topologically, residues 142–151 (ALENTFGGTA) are cytoplasmic. A helical transmembrane segment spans residues 152–172 (LCSYGGFWLSFAAIYIPWFGI). At 173 to 185 (LEAYEDNESDLNN) the chain is on the extracellular side. The chain crosses the membrane as a helical span at residues 186-206 (ALGFYLLGWAIFTFGLTVCTM). Topologically, residues 207-208 (KS) are cytoplasmic. Residues 209 to 229 (TVMFFLLFFLLALTFLLLSIG) form a helical membrane-spanning segment. The Extracellular segment spans residues 230-240 (HFANRLGVTRA). A helical membrane pass occupies residues 241–261 (GGVLGVVVAFIAWYNAYAGVA). Residues 262–283 (TKQNSYVLARPFPLPSTERVIF) lie on the Cytoplasmic side of the membrane.

It belongs to the acetate uptake transporter (AceTr) (TC 2.A.96) family.

The protein localises to the cell membrane. Its subcellular location is the vacuole membrane. In terms of biological role, transporter protein required for ammonia export and acetate uptake and resistance. Necessary for up-regulation and down-regulation of meiotic plaque (MP) component levels in a dependency on external acetate. Has a role in ascus formation. The chain is Accumulation of dyads protein 2 (ADY2) from Saccharomyces cerevisiae (strain ATCC 204508 / S288c) (Baker's yeast).